A 151-amino-acid polypeptide reads, in one-letter code: Transcription antitermination protein NusB (151 aa).

Belongs to the NusB family.

Functionally, involved in transcription antitermination. Required for transcription of ribosomal RNA (rRNA) genes. Binds specifically to the boxA antiterminator sequence of the ribosomal RNA (rrn) operons. The chain is Transcription antitermination protein NusB from Hamiltonella defensa subsp. Acyrthosiphon pisum (strain 5AT).